The sequence spans 447 residues: Ribosomal protein uS12 methylthiotransferase RimO (447 aa).

Residues proline 4–proline 114 enclose the MTTase N-terminal domain. Cysteine 13, cysteine 49, cysteine 78, cysteine 147, cysteine 151, and cysteine 154 together coordinate [4Fe-4S] cluster. A Radical SAM core domain is found at leucine 133–alanine 370. The TRAM domain occupies glutamine 373–lysine 443.

Belongs to the methylthiotransferase family. RimO subfamily. [4Fe-4S] cluster is required as a cofactor.

It is found in the cytoplasm. The enzyme catalyses L-aspartate(89)-[ribosomal protein uS12]-hydrogen + (sulfur carrier)-SH + AH2 + 2 S-adenosyl-L-methionine = 3-methylsulfanyl-L-aspartate(89)-[ribosomal protein uS12]-hydrogen + (sulfur carrier)-H + 5'-deoxyadenosine + L-methionine + A + S-adenosyl-L-homocysteine + 2 H(+). In terms of biological role, catalyzes the methylthiolation of an aspartic acid residue of ribosomal protein uS12. This Acinetobacter baumannii (strain AB0057) protein is Ribosomal protein uS12 methylthiotransferase RimO.